We begin with the raw amino-acid sequence, 419 residues long: Ribosome biogenesis protein WDR12 homolog (419 aa).

Residues 10–91 (VQVHLKTKQE…EDSIEIEYVE (82 aa)) form a ubiquitin-like (UBL) domain region. WD repeat units follow at residues 103 to 140 (LHDD…KLTI), 142 to 184 (GHTA…NAVE), 191 to 230 (GHER…AGES), 249 to 287 (GHRE…IKTE), 289 to 328 (STNK…GSVV), 334 to 374 (GHNA…APLY), and 378 to 416 (GHGE…VENM).

The protein belongs to the WD repeat WDR12/YTM1 family.

It is found in the nucleus. It localises to the nucleolus. Its subcellular location is the nucleoplasm. Functionally, required for maturation of ribosomal RNAs and formation of the large ribosomal subunit. In Drosophila mojavensis (Fruit fly), this protein is Ribosome biogenesis protein WDR12 homolog.